The sequence spans 147 residues: Male-specific protein scotti (147 aa).

Residues 57–76 are disordered; the sequence is EPPLGVFPAQGGPNGPPRLR. Asparagine 128 carries N-linked (GlcNAc...) asparagine glycosylation.

Belongs to the male-specific scotti family.

Post-meiotically transcribed gene that has a role in late spermiogenesis; required for actin cone progression during spermatid individualization. The protein is Male-specific protein scotti of Drosophila simulans (Fruit fly).